The primary structure comprises 649 residues: Threonine--tRNA ligase (649 aa).

Positions 1-60 (MHVVLPDGKQLELPMGATALDAASAIGPRLAQDALAATANGELVDLMTPLPDGASITLIT) constitute a TGS domain. The catalytic stretch occupies residues 248–544 (DHRKLGRELE…LIEHYAGDFP (297 aa)). Zn(2+) contacts are provided by cysteine 341, histidine 392, and histidine 521.

This sequence belongs to the class-II aminoacyl-tRNA synthetase family. Homodimer. Zn(2+) is required as a cofactor.

Its subcellular location is the cytoplasm. It carries out the reaction tRNA(Thr) + L-threonine + ATP = L-threonyl-tRNA(Thr) + AMP + diphosphate + H(+). In terms of biological role, catalyzes the attachment of threonine to tRNA(Thr) in a two-step reaction: L-threonine is first activated by ATP to form Thr-AMP and then transferred to the acceptor end of tRNA(Thr). Also edits incorrectly charged L-seryl-tRNA(Thr). This chain is Threonine--tRNA ligase, found in Deinococcus deserti (strain DSM 17065 / CIP 109153 / LMG 22923 / VCD115).